The chain runs to 420 residues: MTITPPALSVFETLESEVRSYCRGWPAVFDRAQGARLTDEDGHSYLDFFAGAGSLNYGHNNPVLKRALIDYIERDGITHGLDMATTAKRAFLETFQNVILRPRDLPYKVMFPGPTGTNAVESALKLARKVKGRESVVSFTNAFHGMSLGSLAVTGNAFKRAGAGIPLVHGTPMPFDNYFDGTVPDFLWFERLLEDQGSGLNKPAAVIVETVQGEGGINVARAEWLRALQELCLRQVMLLIVDDIQMGCGRTGGFFSFEEAGIVPDIVTLSKSISGYGLPMSLCLFKPELDIWEPGEHNGTFRGNNPAFVTAAAVLDAYWADGQMEKQTLARGEQVEQTLLAICAEEPTAQFRGRGLVWGMEFEDKARASAVCARAFELGLLLETSGPQSEVVKLLPPLTITPEELDEGLRTLARCVRETA.

Position 271 is an N6-(pyridoxal phosphate)lysine (Lys-271).

It belongs to the class-III pyridoxal-phosphate-dependent aminotransferase family. The cofactor is pyridoxal 5'-phosphate.

The enzyme catalyses L-2,4-diaminobutanoate + 2-oxoglutarate = L-aspartate 4-semialdehyde + L-glutamate. Its pathway is amine and polyamine biosynthesis; ectoine biosynthesis; L-ectoine from L-aspartate 4-semialdehyde: step 1/3. In terms of biological role, catalyzes reversively the conversion of L-aspartate beta-semialdehyde (ASA) to L-2,4-diaminobutyrate (DABA) by transamination with L-glutamate. The polypeptide is Diaminobutyrate--2-oxoglutarate transaminase (ectB) (Streptomyces anulatus (Streptomyces chrysomallus)).